Reading from the N-terminus, the 415-residue chain is Heterogeneous nuclear ribonucleoprotein F (415 aa).

Met1 bears the N-acetylmethionine mark. Met2 carries the post-translational modification N-acetylmethionine; in Heterogeneous nuclear ribonucleoprotein F, N-terminally processed. Residues 13-85 form the RRM 1 domain; it reads VKLRGLPWSC…ESMGHRYIEV (73 aa). Residue Lys72 forms a Glycyl lysine isopeptide (Lys-Gly) (interchain with G-Cter in SUMO) linkage. The interaction with RNA stretch occupies residues 81-86; sequence RYIEVF. Lys87 participates in a covalent cross-link: Glycyl lysine isopeptide (Lys-Gly) (interchain with G-Cter in SUMO2). Ser104, Ser107, and Ser161 each carry phosphoserine. Positions 111–188 constitute an RRM 2 domain; sequence GFVRLRGLPF…RYIEVFKSSQ (78 aa). Lys167 is covalently cross-linked (Glycyl lysine isopeptide (Lys-Gly) (interchain with G-Cter in SUMO2)). The interval 179-184 is interaction with RNA; the sequence is RYIEVF. Lys185 participates in a covalent cross-link: Glycyl lysine isopeptide (Lys-Gly) (interchain with G-Cter in SUMO2). Phosphoserine is present on residues Ser187, Ser193, and Ser195. The residue at position 200 (Lys200) is an N6-acetyllysine; alternate. Residue Lys200 forms a Glycyl lysine isopeptide (Lys-Gly) (interchain with G-Cter in SUMO2); alternate linkage. Thr215 is subject to Phosphothreonine. Position 224 is an N6-acetyllysine; alternate (Lys224). A Glycyl lysine isopeptide (Lys-Gly) (interchain with G-Cter in SUMO2); alternate cross-link involves residue Lys224. At Ser265 the chain carries Phosphoserine. The region spanning 289–366 is the RRM 3 domain; sequence HCVHMRGLPY…IELFLNSTTG (78 aa). The interval 355–360 is interaction with RNA; that stretch reads RYIELF.

In terms of assembly, identified in the spliceosome C complex. Interacts with AGO1, AGO2, TBP and TXNL4/DIM1. In terms of processing, sumoylated.

It is found in the nucleus. The protein localises to the nucleoplasm. Functionally, component of the heterogeneous nuclear ribonucleoprotein (hnRNP) complexes which provide the substrate for the processing events that pre-mRNAs undergo before becoming functional, translatable mRNAs in the cytoplasm. Plays a role in the regulation of alternative splicing events. Binds G-rich sequences in pre-mRNAs and keeps target RNA in an unfolded state. This Macaca fascicularis (Crab-eating macaque) protein is Heterogeneous nuclear ribonucleoprotein F (HNRNPF).